Reading from the N-terminus, the 378-residue chain is Chaperone protein DnaJ (378 aa).

The J domain maps to 5–70; the sequence is DYYEVLGVGR…NKKAAYDQFG (66 aa). The CR-type zinc finger occupies 134–212; that stretch reads GLTKELRIPT…CHGDGRVEKT (79 aa). Residues C147, C150, C164, C167, C186, C189, C200, and C203 each coordinate Zn(2+). 4 CXXCXGXG motif repeats span residues 147–154, 164–171, 186–193, and 200–207; these read CDVCDGSG, CTTCHGQG, CPTCHGRG, and CAKCHGDG.

The protein belongs to the DnaJ family. Homodimer. It depends on Zn(2+) as a cofactor.

The protein resides in the cytoplasm. Functionally, participates actively in the response to hyperosmotic and heat shock by preventing the aggregation of stress-denatured proteins and by disaggregating proteins, also in an autonomous, DnaK-independent fashion. Unfolded proteins bind initially to DnaJ; upon interaction with the DnaJ-bound protein, DnaK hydrolyzes its bound ATP, resulting in the formation of a stable complex. GrpE releases ADP from DnaK; ATP binding to DnaK triggers the release of the substrate protein, thus completing the reaction cycle. Several rounds of ATP-dependent interactions between DnaJ, DnaK and GrpE are required for fully efficient folding. Also involved, together with DnaK and GrpE, in the DNA replication of plasmids through activation of initiation proteins. This chain is Chaperone protein DnaJ, found in Shewanella oneidensis (strain ATCC 700550 / JCM 31522 / CIP 106686 / LMG 19005 / NCIMB 14063 / MR-1).